A 318-amino-acid chain; its full sequence is Beta-ketoacyl-[acyl-carrier-protein] synthase III (318 aa).

Residues Cys-113 and His-245 contribute to the active site. An ACP-binding region spans residues 246–250; the sequence is QANIR. Asn-275 is a catalytic residue.

It belongs to the thiolase-like superfamily. FabH family. As to quaternary structure, homodimer.

The protein localises to the cytoplasm. It catalyses the reaction malonyl-[ACP] + acetyl-CoA + H(+) = 3-oxobutanoyl-[ACP] + CO2 + CoA. The protein operates within lipid metabolism; fatty acid biosynthesis. Its function is as follows. Catalyzes the condensation reaction of fatty acid synthesis by the addition to an acyl acceptor of two carbons from malonyl-ACP. Catalyzes the first condensation reaction which initiates fatty acid synthesis and may therefore play a role in governing the total rate of fatty acid production. Possesses both acetoacetyl-ACP synthase and acetyl transacylase activities. Its substrate specificity determines the biosynthesis of branched-chain and/or straight-chain of fatty acids. The protein is Beta-ketoacyl-[acyl-carrier-protein] synthase III of Wolbachia pipientis wMel.